A 359-amino-acid polypeptide reads, in one-letter code: NADH-quinone oxidoreductase subunit H (359 aa).

8 helical membrane passes run 19 to 39 (IGWFPLGLVIVAAIPLVFIAL), 94 to 114 (FLFVIGPGILFVGSFLAFAVL), 127 to 147 (VGLFYAVGIVAIEVVGILAAG), 175 to 195 (IALLCAAMLAGTLSMQQIILM), 202 to 222 (FLHWFLFTNPIAWLPFLIYFI), 255 to 275 (FAVIFLAEYGSMFMVSAIISI), 301 to 321 (VWGAFWIIMKGFFFIFVQMWL), and 337 to 357 (CWKVLTPFSLVSFVLTAIWVI).

This sequence belongs to the complex I subunit 1 family. NDH-1 is composed of 14 different subunits. Subunits NuoA, H, J, K, L, M, N constitute the membrane sector of the complex.

The protein resides in the cell inner membrane. It carries out the reaction a quinone + NADH + 5 H(+)(in) = a quinol + NAD(+) + 4 H(+)(out). NDH-1 shuttles electrons from NADH, via FMN and iron-sulfur (Fe-S) centers, to quinones in the respiratory chain. The immediate electron acceptor for the enzyme in this species is believed to be ubiquinone. Couples the redox reaction to proton translocation (for every two electrons transferred, four hydrogen ions are translocated across the cytoplasmic membrane), and thus conserves the redox energy in a proton gradient. This subunit may bind ubiquinone. This chain is NADH-quinone oxidoreductase subunit H, found in Chlorobaculum tepidum (strain ATCC 49652 / DSM 12025 / NBRC 103806 / TLS) (Chlorobium tepidum).